We begin with the raw amino-acid sequence, 898 residues long: Translation initiation factor IF-2 (898 aa).

The disordered stretch occupies residues Lys-51–Ser-302. 2 stretches are compositionally biased toward basic and acidic residues: residues Ser-100–Thr-164 and Arg-171–Val-230. Over residues Gln-234–Arg-245 the composition is skewed to polar residues. Positions Arg-263–Met-273 are enriched in basic residues. Residues Ser-274–Pro-286 are compositionally biased toward basic and acidic residues. The segment covering Arg-287–Ile-297 has biased composition (basic residues). The tr-type G domain maps to Ser-397–Lys-566. The tract at residues Gly-406 to Thr-413 is G1. Gly-406–Thr-413 is a GTP binding site. The tract at residues Gly-431 to His-435 is G2. The G3 stretch occupies residues Asp-452–Gly-455. GTP contacts are provided by residues Asp-452 to His-456 and Asn-506 to Asp-509. The interval Asn-506–Asp-509 is G4. The G5 stretch occupies residues Ser-542–Lys-544.

It belongs to the TRAFAC class translation factor GTPase superfamily. Classic translation factor GTPase family. IF-2 subfamily.

The protein resides in the cytoplasm. One of the essential components for the initiation of protein synthesis. Protects formylmethionyl-tRNA from spontaneous hydrolysis and promotes its binding to the 30S ribosomal subunits. Also involved in the hydrolysis of GTP during the formation of the 70S ribosomal complex. This Vibrio cholerae serotype O1 (strain ATCC 39541 / Classical Ogawa 395 / O395) protein is Translation initiation factor IF-2.